We begin with the raw amino-acid sequence, 427 residues long: MLDIKWIRENPETLDKALAKRGAAPLSSELIALDEKRREHVGKVQAAQERRNAASKEIGKAMAAKDMGTAEKLKAEVGELKDFLAHAEEDERRLSKELSDALSTIPNIPLDDVPLGKDESDNVELRRIGNPHNFSFQPKEHFELGEALGYMDFERAAKLAGARFTVLKGPLARLERALGQFMLDLHTTEHGYTEVMPPLMVRDEAVYGTGQLPKFSEDLFRTTDGRWLIPTAEVPLTNLVAEEIVDMKGLPLRFTALTPCFRSEAGSAGRDTRGMLRQHQFLKVEMVSITDAESSVAEHERMTACAEEVLKRLGLPFRTVVLCTGDMGFGAQRTYDIEVWLPGQNTYREISSCSTCGDFQGRRMNARYRPEGEKSTRFVHTLNGSGVAVGRALIAVMENYQQEDGSIHIPEALQPYMGGLTRIEKAA.

Position 231-233 (231-233) interacts with L-serine; it reads TAE. Residue 262 to 264 coordinates ATP; it reads RSE. Glutamate 285 contributes to the L-serine binding site. 349–352 provides a ligand contact to ATP; sequence EISS. An L-serine-binding site is contributed by serine 385.

It belongs to the class-II aminoacyl-tRNA synthetase family. Type-1 seryl-tRNA synthetase subfamily. In terms of assembly, homodimer. The tRNA molecule binds across the dimer.

The protein resides in the cytoplasm. It catalyses the reaction tRNA(Ser) + L-serine + ATP = L-seryl-tRNA(Ser) + AMP + diphosphate + H(+). The enzyme catalyses tRNA(Sec) + L-serine + ATP = L-seryl-tRNA(Sec) + AMP + diphosphate + H(+). Its pathway is aminoacyl-tRNA biosynthesis; selenocysteinyl-tRNA(Sec) biosynthesis; L-seryl-tRNA(Sec) from L-serine and tRNA(Sec): step 1/1. Catalyzes the attachment of serine to tRNA(Ser). Is also able to aminoacylate tRNA(Sec) with serine, to form the misacylated tRNA L-seryl-tRNA(Sec), which will be further converted into selenocysteinyl-tRNA(Sec). The chain is Serine--tRNA ligase from Brucella abortus (strain S19).